A 270-amino-acid chain; its full sequence is Hydroxyethylthiazole kinase (270 aa).

Methionine 47 provides a ligand contact to substrate. ATP-binding residues include arginine 123 and serine 170. Residue glycine 197 participates in substrate binding.

This sequence belongs to the Thz kinase family. Mg(2+) serves as cofactor.

It carries out the reaction 5-(2-hydroxyethyl)-4-methylthiazole + ATP = 4-methyl-5-(2-phosphooxyethyl)-thiazole + ADP + H(+). Its pathway is cofactor biosynthesis; thiamine diphosphate biosynthesis; 4-methyl-5-(2-phosphoethyl)-thiazole from 5-(2-hydroxyethyl)-4-methylthiazole: step 1/1. In terms of biological role, catalyzes the phosphorylation of the hydroxyl group of 4-methyl-5-beta-hydroxyethylthiazole (THZ). In Syntrophus aciditrophicus (strain SB), this protein is Hydroxyethylthiazole kinase.